Here is a 386-residue protein sequence, read N- to C-terminus: MINTKEDFLLLIKQIEQKSGYKKPKAFGIARLDRGQLNKNKILQASFALINYEQNFGSAAIMLEAFMQRGVEIDFNASEFVQTLKLEDIDFALSCFKPFLEEDGHQNIDLLKIIKDKFKDDEFSFVCLFEDKEPLSVESIYLKLYLLSTKKVPLRSINLNGAFGLLSNVAWSDDKPIELEYLRANEMRLKMSNQYPKIDFVDKFPRFLAHIIPEDNTRILESSKVRMGASLAAGTTIMPGASYVNFNAGTTGACMVEGRISSSAIVGEGSDVGGGASILGVLSGTSGNAISVGKACLLGANSVTGIPLGDNCIVDAGIAVLEGTKFLLKDAEELAKLNPYFNFDKEIYKGLELKGLNGLHFRQDSISGAMIVALNKKAVKLNEALH.

Glu-257 acts as the Acyl-anhydride intermediate in catalysis. Succinyl-CoA contacts are provided by residues Arg-259, Gly-274, Ser-277, Ala-300, 315–316 (DA), Gly-323, Lys-349, and 362–365 (RQDS).

This sequence belongs to the type 2 tetrahydrodipicolinate N-succinyltransferase family. As to quaternary structure, homotrimer.

The protein localises to the cytoplasm. It catalyses the reaction (S)-2,3,4,5-tetrahydrodipicolinate + succinyl-CoA + H2O = (S)-2-succinylamino-6-oxoheptanedioate + CoA. It functions in the pathway amino-acid biosynthesis; L-lysine biosynthesis via DAP pathway; LL-2,6-diaminopimelate from (S)-tetrahydrodipicolinate (succinylase route): step 1/3. Its function is as follows. Catalyzes the conversion of the cyclic tetrahydrodipicolinate (THDP) into the acyclic N-succinyl-L-2-amino-6-oxopimelate using succinyl-CoA. This Campylobacter jejuni subsp. jejuni serotype O:2 (strain ATCC 700819 / NCTC 11168) protein is 2,3,4,5-tetrahydropyridine-2,6-dicarboxylate N-succinyltransferase.